We begin with the raw amino-acid sequence, 443 residues long: Transcriptional adapter 2-alpha (443 aa).

Phosphoserine is present on S6. The ZZ-type zinc finger occupies S12–P69. Zn(2+)-binding residues include C17, C20, C31, C34, C42, C45, H55, and H59. In terms of domain architecture, SANT spans V70–P122. Residues K132 and K138 each participate in a glycyl lysine isopeptide (Lys-Gly) (interchain with G-Cter in SUMO2) cross-link. Residues L347–R359 show a composition bias toward polar residues. Positions L347–G372 are disordered. Residues N356–A443 form the SWIRM domain. Residues K426–I435 mediate DNA binding.

Interacts with GCN5 and NR3C1. Associated with the P/CAF protein in the PCAF complex. Component of the PCAF complex, at least composed of TADA2L/ADA2, TADA3L/ADA3, TAF5L/PAF65-beta, TAF6L/PAF65-alpha, TAF10/TAFII30, TAF12/TAFII20, TAF9/TAFII31 and TRRAP. Component of the ADA2A-containing complex (ATAC), composed of KAT14, KAT2A, TADA2L, TADA3L, ZZ3, MBIP, WDR5, YEATS2, CCDC101 and DR1. Interacts with CCDC134.

It is found in the nucleus. The protein resides in the chromosome. Functionally, component of the ATAC complex, a complex with histone acetyltransferase activity on histones H3 and H4. Required for the function of some acidic activation domains, which activate transcription from a distant site. Binds double-stranded DNA. Binds dinucleosomes, probably at the linker region between neighboring nucleosomes. Plays a role in chromatin remodeling. May promote TP53/p53 'Lys-321' acetylation, leading to reduced TP53 stability and transcriptional activity. May also promote XRCC6 acetylation thus facilitating cell apoptosis in response to DNA damage. The protein is Transcriptional adapter 2-alpha (TADA2A) of Bos taurus (Bovine).